A 70-amino-acid chain; its full sequence is DNA gyrase inhibitor YacG (70 aa).

4 residues coordinate Zn(2+): Cys9, Cys12, Cys28, and Cys32. The interval 43–70 (ESRKIPGSSIDPESIVTTNNKQDNVDEQ) is disordered.

The protein belongs to the DNA gyrase inhibitor YacG family. In terms of assembly, interacts with GyrB. Requires Zn(2+) as cofactor.

Inhibits all the catalytic activities of DNA gyrase by preventing its interaction with DNA. Acts by binding directly to the C-terminal domain of GyrB, which probably disrupts DNA binding by the gyrase. The sequence is that of DNA gyrase inhibitor YacG from Legionella pneumophila (strain Corby).